A 494-amino-acid chain; its full sequence is Glutamyl-tRNA(Gln) amidotransferase subunit A (494 aa).

Catalysis depends on charge relay system residues lysine 79 and serine 159. The Acyl-ester intermediate role is filled by serine 183.

This sequence belongs to the amidase family. GatA subfamily. As to quaternary structure, heterotrimer of A, B and C subunits.

It carries out the reaction L-glutamyl-tRNA(Gln) + L-glutamine + ATP + H2O = L-glutaminyl-tRNA(Gln) + L-glutamate + ADP + phosphate + H(+). Functionally, allows the formation of correctly charged Gln-tRNA(Gln) through the transamidation of misacylated Glu-tRNA(Gln) in organisms which lack glutaminyl-tRNA synthetase. The reaction takes place in the presence of glutamine and ATP through an activated gamma-phospho-Glu-tRNA(Gln). This is Glutamyl-tRNA(Gln) amidotransferase subunit A from Bartonella bacilliformis (strain ATCC 35685 / KC583 / Herrer 020/F12,63).